Consider the following 65-residue polypeptide: Large ribosomal subunit protein bL35 (65 aa).

The protein belongs to the bacterial ribosomal protein bL35 family.

The sequence is that of Large ribosomal subunit protein bL35 from Nitrosomonas eutropha (strain DSM 101675 / C91 / Nm57).